A 373-amino-acid chain; its full sequence is tRNA-specific 2-thiouridylase MnmA (373 aa).

ATP contacts are provided by residues 12–19 (GMSGGVDS) and Met38. The interval 98-100 (NPD) is interaction with target base in tRNA. Cys103 (nucleophile) is an active-site residue. A disulfide bridge connects residues Cys103 and Cys200. Gly127 contributes to the ATP binding site. The tract at residues 150 to 152 (KDQ) is interaction with tRNA. The active-site Cysteine persulfide intermediate is Cys200. Residues 312-313 (RY) are interaction with tRNA.

This sequence belongs to the MnmA/TRMU family.

It localises to the cytoplasm. It carries out the reaction S-sulfanyl-L-cysteinyl-[protein] + uridine(34) in tRNA + AH2 + ATP = 2-thiouridine(34) in tRNA + L-cysteinyl-[protein] + A + AMP + diphosphate + H(+). Catalyzes the 2-thiolation of uridine at the wobble position (U34) of tRNA, leading to the formation of s(2)U34. The chain is tRNA-specific 2-thiouridylase MnmA from Streptococcus pneumoniae serotype 19F (strain G54).